Consider the following 53-residue polypeptide: Chlorophyll a-b binding protein 1, chloroplastic (53 aa).

Residue Phe-18 participates in chlorophyll b binding. Residues Glu-48 and His-51 each contribute to the chlorophyll a site. Arg-53 serves as a coordination point for chlorophyll b.

It belongs to the light-harvesting chlorophyll a/b-binding (LHC) protein family. In terms of assembly, the LHC complex consists of chlorophyll a-b binding proteins. It depends on Binds at least 14 chlorophylls (8 Chl-a and 6 Chl-b) and carotenoids such as lutein and neoxanthin. as a cofactor. Post-translationally, photoregulated by reversible phosphorylation of its threonine residues.

Its subcellular location is the plastid. It is found in the chloroplast thylakoid membrane. In terms of biological role, the light-harvesting complex (LHC) functions as a light receptor, it captures and delivers excitation energy to photosystems with which it is closely associated. This is Chlorophyll a-b binding protein 1, chloroplastic from Populus euphratica (Euphrates poplar).